Here is a 287-residue protein sequence, read N- to C-terminus: Pantothenate synthetase (287 aa).

ATP is bound at residue 30–37 (MGALHSGH). Residue H37 is the Proton donor of the active site. Q61 is a binding site for (R)-pantoate. Q61 lines the beta-alanine pocket. 152–155 (GQKD) contributes to the ATP binding site. Q158 is a binding site for (R)-pantoate. ATP contacts are provided by residues I181 and 189-192 (ESSR).

Belongs to the pantothenate synthetase family. As to quaternary structure, homodimer.

The protein localises to the cytoplasm. The catalysed reaction is (R)-pantoate + beta-alanine + ATP = (R)-pantothenate + AMP + diphosphate + H(+). The protein operates within cofactor biosynthesis; (R)-pantothenate biosynthesis; (R)-pantothenate from (R)-pantoate and beta-alanine: step 1/1. Catalyzes the condensation of pantoate with beta-alanine in an ATP-dependent reaction via a pantoyl-adenylate intermediate. The protein is Pantothenate synthetase of Corynebacterium efficiens (strain DSM 44549 / YS-314 / AJ 12310 / JCM 11189 / NBRC 100395).